The sequence spans 418 residues: Vasopressin V1a receptor (418 aa).

The disordered stretch occupies residues 1 to 43 (MRLSAGPDAGPSGNSSPWWPLATGAGNTSREAEALGEGNGPPR). The Extracellular portion of the chain corresponds to 1 to 52 (MRLSAGPDAGPSGNSSPWWPLATGAGNTSREAEALGEGNGPPRDVRNEELAK). The N-linked (GlcNAc...) asparagine glycan is linked to N27. The chain crosses the membrane as a helical span at residues 53–76 (LEIAVLAVTFAVAVLGNSSVLLAL). Residues 77-88 (HRTPRKTSRMHL) lie on the Cytoplasmic side of the membrane. The chain crosses the membrane as a helical span at residues 89–110 (FIRHLSLADLAVAFFQVLPQMC). Topologically, residues 111–125 (WDITYRFRGPDWLCR) are extracellular. The cysteines at positions 124 and 203 are disulfide-linked. A helical transmembrane segment spans residues 126–147 (VVKHLQVFGMFASAYMLVVMTA). The Cytoplasmic portion of the chain corresponds to 148-168 (DRYIAVCHPLKTLQQPARRSR). Residues 169-190 (LMIAAAWVLSFVLSTPQYFVFS) traverse the membrane as a helical segment. Over 191–218 (MIEVNNVTKARDCWATFIQPWGSRAYVT) the chain is Extracellular. N196 carries an N-linked (GlcNAc...) asparagine glycan. The helical transmembrane segment at 219 to 239 (WMTGGIFVAPVVILGTCYGFI) threads the bilayer. The Cytoplasmic portion of the chain corresponds to 240–293 (CYNIWCNVRGKTASRQSKGAEQAGVAFQKGFLLAPCVSSVKSISRAKIRTVKMT). A helical transmembrane segment spans residues 294–313 (FVIVTAYIVCWAPFFIIQMW). The Extracellular segment spans residues 314–331 (SVWDPMSVWTESENPTIT). A helical membrane pass occupies residues 332-351 (ITALLGSLNSCCNPWIYMFF). Residues 352–418 (SGHLLQDCVQ…KSIKFIPVST (67 aa)) lie on the Cytoplasmic side of the membrane. 2 S-palmitoyl cysteine lipidation sites follow: C365 and C366. Positions 377–410 (DTDSMSRRQTFYSNNRSPTNSTGMWKDSPKSSKS) are disordered. Polar residues predominate over residues 383-399 (RRQTFYSNNRSPTNSTG). At S404 the chain carries Phosphoserine.

Belongs to the G-protein coupled receptor 1 family. Vasopressin/oxytocin receptor subfamily.

Its subcellular location is the cell membrane. Its function is as follows. Receptor for arginine vasopressin. The activity of this receptor is mediated by G proteins which activate a phosphatidyl-inositol-calcium second messenger system. Has been involved in social behaviors, including affiliation and attachment. The protein is Vasopressin V1a receptor (AVPR1A) of Homo sapiens (Human).